The primary structure comprises 36 residues: Conotoxin Bu21 (36 aa).

Positions 1–21 are excised as a propeptide; it reads DGANAEATDNKPGVFERDEKK. Disulfide bonds link cysteine 22/cysteine 28 and cysteine 23/cysteine 34.

The protein belongs to the conotoxin A superfamily. Expressed by the venom duct.

It is found in the secreted. This Conus bullatus (Bubble cone) protein is Conotoxin Bu21.